A 94-amino-acid polypeptide reads, in one-letter code: Acylphosphatase (94 aa).

In terms of domain architecture, Acylphosphatase-like spans 3-90 (RVHVIVEGRV…SDEKQFRIMY (88 aa)). Catalysis depends on residues Arg18 and Asn36.

This sequence belongs to the acylphosphatase family.

The catalysed reaction is an acyl phosphate + H2O = a carboxylate + phosphate + H(+). In Geobacillus kaustophilus (strain HTA426), this protein is Acylphosphatase (acyP).